Consider the following 165-residue polypeptide: Large ribosomal subunit protein uL30 (165 aa).

The protein belongs to the universal ribosomal protein uL30 family. As to quaternary structure, part of the 50S ribosomal subunit.

The sequence is that of Large ribosomal subunit protein uL30 from Thermoplasma acidophilum (strain ATCC 25905 / DSM 1728 / JCM 9062 / NBRC 15155 / AMRC-C165).